A 386-amino-acid polypeptide reads, in one-letter code: Succinate--CoA ligase [ADP-forming] subunit beta (386 aa).

The region spanning 9-244 is the ATP-grasp domain; that stretch reads KALLRAAGIK…TTQEDHRETQ (236 aa). ATP is bound by residues Lys46, 53–55, Glu100, and Arg103; that span reads GRG. The Mg(2+) site is built by Asn199 and Asp213. Residues Asn264 and 321–323 contribute to the substrate site; that span reads GIV.

The protein belongs to the succinate/malate CoA ligase beta subunit family. As to quaternary structure, heterotetramer of two alpha and two beta subunits. Requires Mg(2+) as cofactor.

It carries out the reaction succinate + ATP + CoA = succinyl-CoA + ADP + phosphate. It catalyses the reaction GTP + succinate + CoA = succinyl-CoA + GDP + phosphate. Its pathway is carbohydrate metabolism; tricarboxylic acid cycle; succinate from succinyl-CoA (ligase route): step 1/1. Its function is as follows. Succinyl-CoA synthetase functions in the citric acid cycle (TCA), coupling the hydrolysis of succinyl-CoA to the synthesis of either ATP or GTP and thus represents the only step of substrate-level phosphorylation in the TCA. The beta subunit provides nucleotide specificity of the enzyme and binds the substrate succinate, while the binding sites for coenzyme A and phosphate are found in the alpha subunit. The polypeptide is Succinate--CoA ligase [ADP-forming] subunit beta (Dichelobacter nodosus (strain VCS1703A)).